The following is a 377-amino-acid chain: Queuine tRNA-ribosyltransferase (377 aa).

The active-site Proton acceptor is Asp-94. Substrate-binding positions include 94-98, Asp-148, Gln-191, and Gly-218; that span reads DSGGF. The segment at 249-255 is RNA binding; that stretch reads GVGTPDD. The active-site Nucleophile is the Asp-268. The RNA binding; important for wobble base 34 recognition stretch occupies residues 273–277; sequence TRAGR.

This sequence belongs to the queuine tRNA-ribosyltransferase family. In terms of assembly, homodimer. Within each dimer, one monomer is responsible for RNA recognition and catalysis, while the other monomer binds to the replacement base PreQ1.

It carries out the reaction 7-aminomethyl-7-carbaguanine + guanosine(34) in tRNA = 7-aminomethyl-7-carbaguanosine(34) in tRNA + guanine. The protein operates within tRNA modification; tRNA-queuosine biosynthesis. Its function is as follows. Catalyzes the base-exchange of a guanine (G) residue with the queuine precursor 7-aminomethyl-7-deazaguanine (PreQ1) at position 34 (anticodon wobble position) in tRNAs with GU(N) anticodons (tRNA-Asp, -Asn, -His and -Tyr). Catalysis occurs through a double-displacement mechanism. The nucleophile active site attacks the C1' of nucleotide 34 to detach the guanine base from the RNA, forming a covalent enzyme-RNA intermediate. The proton acceptor active site deprotonates the incoming PreQ1, allowing a nucleophilic attack on the C1' of the ribose to form the product. After dissociation, two additional enzymatic reactions on the tRNA convert PreQ1 to queuine (Q), resulting in the hypermodified nucleoside queuosine (7-(((4,5-cis-dihydroxy-2-cyclopenten-1-yl)amino)methyl)-7-deazaguanosine). This Brucella melitensis biotype 1 (strain ATCC 23456 / CCUG 17765 / NCTC 10094 / 16M) protein is Queuine tRNA-ribosyltransferase.